The primary structure comprises 363 residues: tRNA-specific 2-thiouridylase MnmA (363 aa).

ATP contacts are provided by residues 13–20 (GLSGGVDS) and methionine 39. Residues 99–101 (NPD) are interaction with target base in tRNA. The active-site Nucleophile is the cysteine 104. Cysteine 104 and cysteine 200 are joined by a disulfide. Glycine 128 contributes to the ATP binding site. Residues 150 to 152 (KDQ) are interaction with tRNA. Catalysis depends on cysteine 200, which acts as the Cysteine persulfide intermediate. The tract at residues 310–311 (RY) is interaction with tRNA.

This sequence belongs to the MnmA/TRMU family.

It localises to the cytoplasm. It catalyses the reaction S-sulfanyl-L-cysteinyl-[protein] + uridine(34) in tRNA + AH2 + ATP = 2-thiouridine(34) in tRNA + L-cysteinyl-[protein] + A + AMP + diphosphate + H(+). Catalyzes the 2-thiolation of uridine at the wobble position (U34) of tRNA, leading to the formation of s(2)U34. This chain is tRNA-specific 2-thiouridylase MnmA, found in Ruthia magnifica subsp. Calyptogena magnifica.